A 32-amino-acid chain; its full sequence is Potassium channel toxin alpha-KTx 9.4 (32 aa).

3 cysteine pairs are disulfide-bonded: C3/C19, C6/C24, and C10/C26.

As to expression, expressed by the venom gland.

The protein localises to the secreted. Functionally, blocker of human voltage-gated potassium channel Kv1.1/KCNA1. This chain is Potassium channel toxin alpha-KTx 9.4, found in Hottentotta tamulus (Eastern Indian scorpion).